The following is an 87-amino-acid chain: Toxin Cll3 (87 aa).

The N-terminal stretch at 1–19 is a signal peptide; sequence MNSLLMITACLAVIGTVWA. Residues 20-85 form the LCN-type CS-alpha/beta domain; that stretch reads KEGYIVNYYD…VWPLPNKTCY (66 aa). 4 disulfide bridges follow: C31/C84, C35/C60, C44/C65, and C48/C67. At Y85 the chain carries Tyrosine amide.

This sequence belongs to the long (4 C-C) scorpion toxin superfamily. Sodium channel inhibitor family. Beta subfamily. In terms of tissue distribution, expressed by the venom gland.

The protein resides in the secreted. Beta toxins bind voltage-independently at site-4 of sodium channels (Nav) and shift the voltage of activation toward more negative potentials thereby affecting sodium channel activation and promoting spontaneous and repetitive firing. This chain is Toxin Cll3, found in Centruroides limpidus (Mexican scorpion).